The primary structure comprises 1415 residues: DNA-directed RNA polymerase subunit beta' (1415 aa).

Positions 72, 74, 87, and 90 each coordinate Zn(2+). Residues D463, D465, and D467 each coordinate Mg(2+). Zn(2+) is bound by residues C811, C885, C892, and C895.

It belongs to the RNA polymerase beta' chain family. In terms of assembly, the RNAP catalytic core consists of 2 alpha, 1 beta, 1 beta' and 1 omega subunit. When a sigma factor is associated with the core the holoenzyme is formed, which can initiate transcription. Mg(2+) is required as a cofactor. Zn(2+) serves as cofactor.

The catalysed reaction is RNA(n) + a ribonucleoside 5'-triphosphate = RNA(n+1) + diphosphate. In terms of biological role, DNA-dependent RNA polymerase catalyzes the transcription of DNA into RNA using the four ribonucleoside triphosphates as substrates. The polypeptide is DNA-directed RNA polymerase subunit beta' (Cereibacter sphaeroides (strain ATCC 17025 / ATH 2.4.3) (Rhodobacter sphaeroides)).